The chain runs to 241 residues: Accessory protein p30II (241 aa).

2 consecutive short sequence motifs (nuclear localization signal) follow at residues 73 to 78 (RRCRSR) and 91 to 98 (GPRRSRPR). 2 stretches are compositionally biased toward low complexity: residues 79–100 (CVSP…PRLS) and 107–136 (PSST…TSRS). Residues 79–151 (CVSPRGGAFS…GKHRNSPADT (73 aa)) form a disordered region. The Mitochondrial targeting signal signature appears at 175–184 (LRVWRLCTRR).

It belongs to the HTLV-1 accessory protein p30II family. P30II binds to the KIX domains of CREBBP and EP300.

Its subcellular location is the host nucleus. The protein resides in the host nucleolus. The protein localises to the host mitochondrion inner membrane. In terms of biological role, p30II is a multifunctional regulator that sequesters EP300/CREBBP and down-regulates CREB-responsive element (CRE) and Tax-responsive element (TRE) mediated transcription. Specifically binds and represses tax/rex mRNA nuclear export. Since Tax and Rex are positive regulators of viral gene expression, their inhibition by p30II reduces virion production, and allows the virus to escape the host immune surveillance and persist latently in an immune-competent host. P13II increases mitochondrial permeability to monovalent cations, producing a rapid, membrane potential-dependent influx of potassium. This could involve a channel-forming activity. Interferes with cell proliferation and transformation and promotes apoptosis induced by ceramide and Fas ligand, probably using the Ras signaling. The protein is Accessory protein p30II of Human T-cell leukemia virus 1 (strain Japan ATK-1 subtype A) (HTLV-1).